The chain runs to 313 residues: tRNA uridine(34) hydroxylase (313 aa).

The Rhodanese domain occupies 124-218 (SDPEVLLIDT…YLEEVPQEET (95 aa)). Residue Cys-178 is the Cysteine persulfide intermediate of the active site.

It belongs to the TrhO family.

It catalyses the reaction uridine(34) in tRNA + AH2 + O2 = 5-hydroxyuridine(34) in tRNA + A + H2O. Its function is as follows. Catalyzes oxygen-dependent 5-hydroxyuridine (ho5U) modification at position 34 in tRNAs. The protein is tRNA uridine(34) hydroxylase of Pseudomonas fluorescens (strain Pf0-1).